The following is a 225-amino-acid chain: NAD(P)H-quinone oxidoreductase subunit K, chloroplastic (225 aa).

Residues C43, C44, C108, and C139 each contribute to the [4Fe-4S] cluster site.

Belongs to the complex I 20 kDa subunit family. NDH is composed of at least 16 different subunits, 5 of which are encoded in the nucleus. It depends on [4Fe-4S] cluster as a cofactor.

It is found in the plastid. It localises to the chloroplast thylakoid membrane. It catalyses the reaction a plastoquinone + NADH + (n+1) H(+)(in) = a plastoquinol + NAD(+) + n H(+)(out). The catalysed reaction is a plastoquinone + NADPH + (n+1) H(+)(in) = a plastoquinol + NADP(+) + n H(+)(out). Its function is as follows. NDH shuttles electrons from NAD(P)H:plastoquinone, via FMN and iron-sulfur (Fe-S) centers, to quinones in the photosynthetic chain and possibly in a chloroplast respiratory chain. The immediate electron acceptor for the enzyme in this species is believed to be plastoquinone. Couples the redox reaction to proton translocation, and thus conserves the redox energy in a proton gradient. The polypeptide is NAD(P)H-quinone oxidoreductase subunit K, chloroplastic (Nicotiana tabacum (Common tobacco)).